The primary structure comprises 286 residues: MEEKRRRARVQGAWAAPVKSQAIAQPATTAKSHLHQKPGQTWKNKEHHLSDREFVFKEPQQVVRRAPEPRVIDREGVYEISLSPTGVSRVCLYPGFVDVKEADWILEQLCQDVPWKQRTGIREDITYQQPRLTAWYGELPYTYSRITMEPNPHWHPVLRTLKNRIEENTGHTFNSLLCNLYRNEKDSVDWHSDDEPSLGRCPIIASLSFGATRTFEMRKKPPPEENGDYTYVERVKIPLDHGTLLIMEGATQADWQHRVPKEYHSREPRVNLTFRTVYPDPRGAPW.

The interval 21–45 (QAIAQPATTAKSHLHQKPGQTWKNK) is disordered. The segment covering 22 to 31 (AIAQPATTAK) has biased composition (polar residues). Substrate is bound by residues Trp-115 and 141–143 (YTY). A Fe2OG dioxygenase domain is found at 172–278 (TFNSLLCNLY…RVNLTFRTVY (107 aa)). At Leu-177 the chain carries (4R)-5-hydroxyleucine; alternate. Leu-177 carries the (4R)-5-oxoleucine; alternate modification. 179 to 181 (NLY) serves as a coordination point for 2-oxoglutarate. Fe cation contacts are provided by His-191 and Asp-193. Asp-194 is a substrate binding site. Residue His-257 coordinates Fe cation. 2-oxoglutarate-binding positions include 269–275 (RVNLTFR) and Arg-275.

The protein belongs to the alkB family. Interacts with the ASCC complex composed of ASCC1, ASCC2 and ASCC3. Interacts directly with ASCC3, and is thereby recruited to the ASCC complex. Interacts with OTUD4; the interaction is direct. Interacts with USP7 and USP9X. Fe(2+) is required as a cofactor. Post-translationally, ubiquitinated; undergoes 'Lys-48'-linked polyubiquitination. OTUD4 promotes USP7 and USP9X-dependent deubiquitination of 'Lys-48'-polyubiquitinated ALKBH3 promoting the repair of alkylated DNA lesions. Ubiquitous. Detected in heart, pancreas, skeletal muscle, thymus, testis, ovary, spleen, prostate, small intestine, peripheral blood leukocytes, urinary bladder and colon.

It is found in the nucleus. The protein localises to the cytoplasm. It carries out the reaction an N(1)-methyladenosine in mRNA + 2-oxoglutarate + O2 = an adenosine in mRNA + formaldehyde + succinate + CO2. The catalysed reaction is a methylated nucleobase within DNA + 2-oxoglutarate + O2 = a nucleobase within DNA + formaldehyde + succinate + CO2. The enzyme catalyses an N(1)-methyl-2'-deoxyadenosine in single-stranded DNA + 2-oxoglutarate + O2 = a 2'-deoxyadenosine in single-stranded DNA + formaldehyde + succinate + CO2 + H(+). It catalyses the reaction an N(3)-methyl-2'-deoxycytidine in single-stranded DNA + 2-oxoglutarate + O2 = a 2'-deoxycytidine in single-stranded DNA + formaldehyde + succinate + CO2 + H(+). It carries out the reaction a 3,N(4)-etheno-2'-deoxycytidine in single-stranded DNA + 2-oxoglutarate + O2 + H2O = a 2'-deoxycytidine in single-stranded DNA + glyoxal + succinate + CO2. Activated by ascorbate. Functionally, dioxygenase that mediates demethylation of DNA and RNA containing 1-methyladenosine (m1A). Repairs alkylated DNA containing 1-methyladenosine (m1A) and 3-methylcytosine (m3C) by oxidative demethylation. Has a strong preference for single-stranded DNA. Able to process alkylated m3C within double-stranded regions via its interaction with ASCC3, which promotes DNA unwinding to generate single-stranded substrate needed for ALKBH3. Can repair exocyclic 3,N4-ethenocytosine adducs in single-stranded DNA. Also acts on RNA. Demethylates N(1)-methyladenosine (m1A) RNA, an epigenetic internal modification of messenger RNAs (mRNAs) highly enriched within 5'-untranslated regions (UTRs) and in the vicinity of start codons. Requires molecular oxygen, alpha-ketoglutarate and iron. The protein is Alpha-ketoglutarate-dependent dioxygenase alkB homolog 3 of Homo sapiens (Human).